The sequence spans 321 residues: Ribose-phosphate pyrophosphokinase (321 aa).

ATP-binding positions include 44–46 (DGE) and 103–104 (RQ). Mg(2+)-binding residues include H137 and D179. Residue K202 is part of the active site. D-ribose 5-phosphate-binding positions include R204, D228, and 232-236 (DTAGT).

Belongs to the ribose-phosphate pyrophosphokinase family. Class I subfamily. Homohexamer. It depends on Mg(2+) as a cofactor.

The protein localises to the cytoplasm. The catalysed reaction is D-ribose 5-phosphate + ATP = 5-phospho-alpha-D-ribose 1-diphosphate + AMP + H(+). The protein operates within metabolic intermediate biosynthesis; 5-phospho-alpha-D-ribose 1-diphosphate biosynthesis; 5-phospho-alpha-D-ribose 1-diphosphate from D-ribose 5-phosphate (route I): step 1/1. Functionally, involved in the biosynthesis of the central metabolite phospho-alpha-D-ribosyl-1-pyrophosphate (PRPP) via the transfer of pyrophosphoryl group from ATP to 1-hydroxyl of ribose-5-phosphate (Rib-5-P). The sequence is that of Ribose-phosphate pyrophosphokinase from Staphylococcus aureus (strain COL).